The sequence spans 309 residues: Postacrosomal sheath WW domain-binding protein (309 aa).

Positions 45-87 (GRKTGTLFLTSYRVIFITSCSISDPMLSFMMPFDLMTNLTVEQ) constitute a GRAM domain. 10 consecutive repeat copies span residues 175–181 (YGAPPAG), 182–188 (YGAPPPG), 189–195 (YGAPPAG), 217–223 (YGAPPLG), 224–230 (YGAPPAG), 231–237 (YGAPPLG), 238–244 (YGAPPLG), 245–251 (YGTPPLG), 252–258 (YGAPPLG), and 259–265 (YGAPPAG). The segment at 175–265 (YGAPPAGYGA…PLGYGAPPAG (91 aa)) is 10 X 7 AA tandem repeat of Y-G-X-P-P-X-G. The PPxY motif motif lies at 186-189 (PPGY). Over residues 251–272 (GYGAPPLGYGAPPAGNEGPPAG) the composition is skewed to low complexity. Positions 251 to 309 (GYGAPPLGYGAPPAGNEGPPAGYRASPAGSGARPQESTAAQAPENEASLPSASSSQVHS) are disordered. Residues 298 to 309 (SLPSASSSQVHS) show a composition bias toward polar residues.

As to expression, expressed in testis.

Functionally, may play a role in meiotic resumption and pronuclear formation, mediated by a WW domain-signaling pathway during fertilization. The sequence is that of Postacrosomal sheath WW domain-binding protein (WBP2NL) from Homo sapiens (Human).